A 554-amino-acid chain; its full sequence is Malate synthase 1 (554 aa).

The Proton acceptor role is filled by R177. The active-site Proton donor is D457. Residues 552-554 carry the SKL peroxisome targeting motif motif; that stretch reads SKL.

This sequence belongs to the malate synthase family. Interacts with PEX9.

It is found in the peroxisome matrix. It carries out the reaction glyoxylate + acetyl-CoA + H2O = (S)-malate + CoA + H(+). It functions in the pathway carbohydrate metabolism; glyoxylate cycle; (S)-malate from isocitrate: step 2/2. Malate synthase which takes part in the glyoxylate cycle. MLS1 activity is essential for cells to grow on oleic acid as a sole carbon source. Two steps of the glyoxylate cycle take place in the cytosol, the splitting of isocitrate into succinate and glyoxylate, and the dehydrogenation of malate to oxaloacetate. However, the formation of malate from glyoxylate and acetyl-CoA undertaken MLS1, occurs in the peroxisomes when cells are grown on oleic acid. The source of acetyl-CoA being either peroxisomal when breaking down fatty acids, or cytosolic when extra-cellular two-carbon substrates are used, therefore, although not strictly essential, the peroxisomal localization of MLS1 appears to be advantageous for cells growing on oleic acid, in that acetyl-CoA production and utilization are thereby intimately compartmentalized together to increase efficiency. This is Malate synthase 1 from Saccharomyces cerevisiae (strain YJM789) (Baker's yeast).